Consider the following 238-residue polypeptide: Probable transcriptional regulatory protein llmg_0242 (238 aa).

Belongs to the TACO1 family. YeeN subfamily.

It is found in the cytoplasm. This is Probable transcriptional regulatory protein llmg_0242 from Lactococcus lactis subsp. cremoris (strain MG1363).